A 95-amino-acid polypeptide reads, in one-letter code: Aspartyl/glutamyl-tRNA(Asn/Gln) amidotransferase subunit C (95 aa).

The protein belongs to the GatC family. In terms of assembly, heterotrimer of A, B and C subunits.

It catalyses the reaction L-glutamyl-tRNA(Gln) + L-glutamine + ATP + H2O = L-glutaminyl-tRNA(Gln) + L-glutamate + ADP + phosphate + H(+). The enzyme catalyses L-aspartyl-tRNA(Asn) + L-glutamine + ATP + H2O = L-asparaginyl-tRNA(Asn) + L-glutamate + ADP + phosphate + 2 H(+). Allows the formation of correctly charged Asn-tRNA(Asn) or Gln-tRNA(Gln) through the transamidation of misacylated Asp-tRNA(Asn) or Glu-tRNA(Gln) in organisms which lack either or both of asparaginyl-tRNA or glutaminyl-tRNA synthetases. The reaction takes place in the presence of glutamine and ATP through an activated phospho-Asp-tRNA(Asn) or phospho-Glu-tRNA(Gln). The sequence is that of Aspartyl/glutamyl-tRNA(Asn/Gln) amidotransferase subunit C from Ruegeria sp. (strain TM1040) (Silicibacter sp.).